The chain runs to 159 residues: Large ribosomal subunit protein uL10 (159 aa).

Belongs to the universal ribosomal protein uL10 family. As to quaternary structure, part of the ribosomal stalk of the 50S ribosomal subunit. The N-terminus interacts with L11 and the large rRNA to form the base of the stalk. The C-terminus forms an elongated spine to which L12 dimers bind in a sequential fashion forming a multimeric L10(L12)X complex.

In terms of biological role, forms part of the ribosomal stalk, playing a central role in the interaction of the ribosome with GTP-bound translation factors. This Campylobacter jejuni subsp. jejuni serotype O:2 (strain ATCC 700819 / NCTC 11168) protein is Large ribosomal subunit protein uL10 (rplJ).